A 283-amino-acid chain; its full sequence is Isochorismatase domain-containing protein 1 (283 aa).

Belongs to the isochorismatase family.

This Salmo salar (Atlantic salmon) protein is Isochorismatase domain-containing protein 1 (isoc1).